The sequence spans 90 residues: Putative ATPase inhibitor, mitochondrial (90 aa).

Residues 42–89 (ESREKAKEDFFVHQHEIEQLRKLKESLKLHREELDELESRVDKKMKSN) adopt a coiled-coil conformation.

It belongs to the ATPase inhibitor family.

It localises to the mitochondrion. Functionally, forms a one-to-one complex with ATPase to inhibit the enzyme activity completely. The sequence is that of Putative ATPase inhibitor, mitochondrial (inh1) from Schizosaccharomyces pombe (strain 972 / ATCC 24843) (Fission yeast).